The sequence spans 252 residues: Major prion protein (252 aa).

An N-terminal signal peptide occupies residues 1-22 (MANLGCWMLFLFVATWSDLGLC). Residues 23–38 (KKRPKPGGWNTGGSRY) form an interaction with ADGRG6 region. The segment at 23 to 229 (KKRPKPGGWN…ESQAYYQRGS (207 aa)) is interaction with GRB2, ERI3 and SYN1. The segment at 26 to 106 (PKPGGWNTGG…QWNKPSKPKT (81 aa)) is disordered. A run of 5 repeats spans residues 51-58 (PQGGGWGQ), 59-66 (PHGGGWGQ), 67-74 (PHGGGWGQ), 75-82 (PHGGGWGQ), and 83-90 (PHGGGWGQ). Residues 51–90 (PQGGGWGQPHGGGWGQPHGGGWGQPHGGGWGQPHGGGWGQ) are 5 X 8 AA tandem repeats of P-H-G-G-G-W-G-Q. Positions 52 to 94 (QGGGWGQPHGGGWGQPHGGGWGQPHGGGWGQPHGGGWGQGGGT) are enriched in gly residues. Cu(2+) contacts are provided by H60, G61, G62, H68, G69, G70, H76, G77, G78, H84, G85, and G86. A disulfide bond links C178 and C213. Residues N180 and N196 are each glycosylated (N-linked (GlcNAc...) asparagine). A lipid anchor (GPI-anchor amidated serine) is attached at S229. The propeptide at 230-252 (SMVLFSSPPVILLISFLIFLIVG) is removed in mature form.

This sequence belongs to the prion family. Monomer and homodimer. Has a tendency to aggregate into amyloid fibrils containing a cross-beta spine, formed by a steric zipper of superposed beta-strands. Soluble oligomers may represent an intermediate stage on the path to fibril formation. Copper binding may promote oligomerization. Interacts with GRB2, APP, ERI3/PRNPIP and SYN1. Mislocalized cytosolically exposed PrP interacts with MGRN1; this interaction alters MGRN1 subcellular location and causes lysosomal enlargement. Interacts with APP. Interacts with KIAA1191. Interacts with ADGRG6.

It is found in the cell membrane. Its subcellular location is the golgi apparatus. In terms of biological role, its primary physiological function is unclear. May play a role in neuronal development and synaptic plasticity. May be required for neuronal myelin sheath maintenance. May promote myelin homeostasis through acting as an agonist for ADGRG6 receptor. May play a role in iron uptake and iron homeostasis. Soluble oligomers are toxic to cultured neuroblastoma cells and induce apoptosis (in vitro). Association with GPC1 (via its heparan sulfate chains) targets PRNP to lipid rafts. Also provides Cu(2+) or Zn(2+) for the ascorbate-mediated GPC1 deaminase degradation of its heparan sulfate side chains. The chain is Major prion protein (PRNP) from Callithrix jacchus (White-tufted-ear marmoset).